The sequence spans 247 residues: Small ribosomal subunit protein uS2 (247 aa).

It belongs to the universal ribosomal protein uS2 family.

This is Small ribosomal subunit protein uS2 from Cupriavidus metallidurans (strain ATCC 43123 / DSM 2839 / NBRC 102507 / CH34) (Ralstonia metallidurans).